Consider the following 238-residue polypeptide: Ubiquinone biosynthesis O-methyltransferase (238 aa).

Residues Arg38, Gly57, Asp78, and Leu124 each contribute to the S-adenosyl-L-methionine site.

The protein belongs to the methyltransferase superfamily. UbiG/COQ3 family.

It carries out the reaction a 3-demethylubiquinol + S-adenosyl-L-methionine = a ubiquinol + S-adenosyl-L-homocysteine + H(+). It catalyses the reaction a 3-(all-trans-polyprenyl)benzene-1,2-diol + S-adenosyl-L-methionine = a 2-methoxy-6-(all-trans-polyprenyl)phenol + S-adenosyl-L-homocysteine + H(+). It functions in the pathway cofactor biosynthesis; ubiquinone biosynthesis. In terms of biological role, O-methyltransferase that catalyzes the 2 O-methylation steps in the ubiquinone biosynthetic pathway. In Marinobacter nauticus (strain ATCC 700491 / DSM 11845 / VT8) (Marinobacter aquaeolei), this protein is Ubiquinone biosynthesis O-methyltransferase.